We begin with the raw amino-acid sequence, 485 residues long: uncharacterized protein (485 aa).

11 helical membrane passes run 79 to 99, 117 to 137, 139 to 159, 170 to 190, 199 to 219, 275 to 295, 313 to 333, 355 to 375, 380 to 400, 421 to 441, and 448 to 468; these read LVTL…LIFA, VFAL…FLVF, FFSG…LADL, VIYF…SGFI, WEFW…FLLL, ILIC…LVLI, GLMY…AMPI, LPMG…FGWT, IFWF…IMTS, GVKI…ESLF, and WGCT…PILF.

The protein belongs to the major facilitator superfamily. CAR1 family.

The protein localises to the golgi apparatus. It localises to the membrane. This is an uncharacterized protein from Schizosaccharomyces pombe (strain 972 / ATCC 24843) (Fission yeast).